The primary structure comprises 1143 residues: Condensin-2 complex subunit G2 (1143 aa).

At Ser-30 the chain carries Phosphoserine. The stretch at 460–498 is one HEAT repeat; sequence LLPALRYSLHDNSEKVRVAFVDMLLKIKAVRAAKFWKIC. Phosphothreonine is present on residues Thr-805 and Thr-1119.

Component of the condensin-2 complex, which contains the SMC2 and SMC4 heterodimer, and 3 non SMC subunits that probably regulate the complex: NCAPH2, NCAPD3 and NCAPG2.

It is found in the nucleus. Its function is as follows. Regulatory subunit of the condensin-2 complex, a complex which establishes mitotic chromosome architecture and is involved in physical rigidity of the chromatid axis. This chain is Condensin-2 complex subunit G2 (NCAPG2), found in Homo sapiens (Human).